A 297-amino-acid polypeptide reads, in one-letter code: Tyrosine recombinase XerD (297 aa).

Positions Met1–Tyr86 constitute a Core-binding (CB) domain. Residues Arg107–Glu291 form the Tyr recombinase domain. Residues Arg147, Lys171, His243, Arg246, and His269 contribute to the active site. Catalysis depends on Tyr278, which acts as the O-(3'-phospho-DNA)-tyrosine intermediate.

The protein belongs to the 'phage' integrase family. XerD subfamily. As to quaternary structure, forms a cyclic heterotetrameric complex composed of two molecules of XerC and two molecules of XerD.

It localises to the cytoplasm. Its function is as follows. Site-specific tyrosine recombinase, which acts by catalyzing the cutting and rejoining of the recombining DNA molecules. The XerC-XerD complex is essential to convert dimers of the bacterial chromosome into monomers to permit their segregation at cell division. It also contributes to the segregational stability of plasmids. This Pasteurella multocida (strain Pm70) protein is Tyrosine recombinase XerD.